The primary structure comprises 323 residues: Phosphopantothenate--cysteine ligase 2 (323 aa).

It belongs to the PPC synthetase family. Homodimer.

It catalyses the reaction (R)-4'-phosphopantothenate + L-cysteine + CTP = N-[(R)-4-phosphopantothenoyl]-L-cysteine + CMP + diphosphate + H(+). It participates in cofactor biosynthesis; coenzyme A biosynthesis; CoA from (R)-pantothenate: step 2/5. Catalyzes the first step in the biosynthesis of coenzyme A from vitamin B5, where cysteine is conjugated to 4'-phosphopantothenate to form 4-phosphopantothenoylcysteine. In Oryza sativa subsp. japonica (Rice), this protein is Phosphopantothenate--cysteine ligase 2.